The primary structure comprises 372 residues: Alanine dehydrogenase (372 aa).

Substrate-binding residues include R15 and K75. The Proton donor/acceptor role is filled by H96. NAD(+)-binding positions include S134, 178 to 179 (IA), D198, S220, 239 to 240 (VL), 267 to 270 (IAID), R280, and 299 to 302 (VANM). Residue D270 is the Proton donor/acceptor of the active site.

Belongs to the AlaDH/PNT family. As to quaternary structure, homohexamer.

It is found in the cytoplasm. It catalyses the reaction L-alanine + NAD(+) + H2O = pyruvate + NH4(+) + NADH + H(+). It participates in amino-acid degradation; L-alanine degradation via dehydrogenase pathway; NH(3) and pyruvate from L-alanine: step 1/1. With respect to regulation, inhibited by p-chloromercuribenzoate and HgCl(2) and by Cu(2+) and Pb(2+) salts, unaffected by amino acids such as D-alanine and beta-alanine or by nucleotides or nucleosides. Functionally, catalyzes the reversible reductive amination of pyruvate to L-alanine. Prefers L-alanine for oxidative deamination, other substrates are poorly reactive. In the other direction 2-oxobutyrate is almost as reactive as pyruvate. Ammonia is the sole amino donor for the reductive amination of pyruvate, NADPH is inert. Reductive amination proceeds through a sequential, ordered ternary-binary mechanism, where NADH binds first followed by ammonia and pyruvate; the products are released in the order L-alanine and NAD(+). A key factor in the assimilation of L-alanine as an energy source via the tricarboxylic acid cycle during sporulation. The protein is Alanine dehydrogenase (ald) of Lysinibacillus sphaericus (Bacillus sphaericus).